Consider the following 416-residue polypeptide: Alpha-1-antiproteinase (416 aa).

The first 24 residues, 1–24 (MALSITRGLLLLAALCCLAPISLA), serve as a signal peptide directing secretion. N-linked (GlcNAc...) asparagine glycans are attached at residues asparagine 68, asparagine 105, asparagine 143, and asparagine 269. Positions 371-390 (GSTFLEAIPMSLPPDVEFNR) are RCL. Position 381 is a phosphoserine (serine 381).

The protein belongs to the serpin family. Interacts with CELA2A. Interacts with ERGIC3 and LMAN1/ERGIC53. Interacts with PRSS1/Trypsin. Plasma.

It localises to the secreted. Its function is as follows. Inhibitor of serine proteases. Its primary target is elastase, but it also has a moderate affinity for plasmin and thrombin. Inhibits trypsin, chymotrypsin and plasminogen activator. The polypeptide is Alpha-1-antiproteinase (SERPINA1) (Bos taurus (Bovine)).